A 192-amino-acid chain; its full sequence is A-type ATP synthase subunit E (192 aa).

This sequence belongs to the V-ATPase E subunit family. As to quaternary structure, has multiple subunits with at least A(3), B(3), C, D, E, F, H, I and proteolipid K(x).

It localises to the cell membrane. Functionally, component of the A-type ATP synthase that produces ATP from ADP in the presence of a proton gradient across the membrane. In Methanoculleus marisnigri (strain ATCC 35101 / DSM 1498 / JR1), this protein is A-type ATP synthase subunit E.